A 234-amino-acid polypeptide reads, in one-letter code: CD-NTase-associated protein 13 (234 aa).

The chain crosses the membrane as a helical span at residues 20–42; sequence TIMKNVIANVSTAITLALMILWI.

In the C-terminal section; belongs to the bacterial STING family.

The protein resides in the cell inner membrane. Effector protein of a CBASS antivirus system. CBASS (cyclic oligonucleotide-based antiphage signaling system) provides immunity against bacteriophage. The CD-NTase protein synthesizes cyclic nucleotides in response to infection; these serve as specific second messenger signals. The signals activate a diverse range of effectors, leading to bacterial cell death and thus abortive phage infection. A type I-D CBASS(GG) system. Functionally, binds c-di-GMP (synthesized by the cognate CdnE encoded upstream in the same operon) and about 10-fold less well 3'3'-cGAMP, but not c-di-AMP, 2'3'-cGAMP or cUMP-AMP (tested with a protein without the transmembrane region). The effector protein for this CBASS system, its activity is stimulated by c-di-GMP and leads to cell death. In Roseivirga ehrenbergii (strain DSM 102268 / JCM 13514 / KCTC 12282 / NCIMB 14502 / KMM 6017), this protein is CD-NTase-associated protein 13.